A 77-amino-acid polypeptide reads, in one-letter code: Chassatide C13 (77 aa).

Residues 1 to 24 form the signal peptide; it reads MAKFATQLLLFVLIASLVMLEVHA. Positions 25–44 are cleaved as a propeptide — removed in mature form; the sequence is SNTFQVPDLGKRLLMNRDPN. The segment at residues 45-75 is a cross-link (cyclopeptide (Gly-Asn)); it reads GFPCAESCVYIPCTVTALLGCSCRNRVCYRN. 3 disulfides stabilise this stretch: cysteine 48/cysteine 65, cysteine 52/cysteine 67, and cysteine 57/cysteine 72. Positions 76 to 77 are cleaved as a propeptide — removed in mature form; the sequence is EL.

This is a cyclic peptide. Expressed in fruit and pedicel but not in root, leaf and stem (at protein level).

Probably participates in a plant defense mechanism. The polypeptide is Chassatide C13 (Chassalia chartacea (Chassalia curviflora)).